A 479-amino-acid chain; its full sequence is Isoprimeverose transporter (479 aa).

The next 11 helical transmembrane spans lie at 54–74, 102–122, 131–151, 174–194, 205–225, 253–273, 289–309, 321–341, 348–368, 397–417, and 431–451; these read MFFYTDVFGISAAIVGTLFLV, PYWLWFAIPFAVFSVLCFTVP, VWAYVTYIGVDVLYSAVNIPI, FMGTLGATIISTIALPLVAYF, WFMVALIMAVIAMVIFFIVFA, WPWVIVIFINFIYWLGMQTRS, LASFILGLQLVALLAVVITPW, LMGMLLAIVGQLILWGGSKAL, VGTIVGYLGTGFVSGLIAVML, FGMGIGGAVTGLILSAGGYVA, and MNYVWVPIVGFGLSAIALLFY.

The protein belongs to the sodium:galactoside symporter (TC 2.A.2) family.

The protein localises to the cell membrane. Functionally, involved in the metabolism of isoprimeverose. Transports isoprimeverose into the cell. Transport is driven by the proton motive force generated by malolactic fermentation. Cannot transport D-xylose. In Lactiplantibacillus pentosus (Lactobacillus pentosus), this protein is Isoprimeverose transporter.